The following is a 359-amino-acid chain: Src kinase-associated phosphoprotein 2 (359 aa).

Phosphoserine occurs at positions 5, 6, and 9. Residues 14 to 64 (PEEIRNLLADVETFVADILKGENLSKKAKEKRESLIKKIKDVKSIYLQEFQ) are homodimerization. Residues 66–88 (KGDAEDGEEYDDPFAGPPDTISL) are disordered. A Phosphotyrosine modification is found at Y75. Phosphoserine is present on residues S87 and S90. In terms of domain architecture, PH spans 116 to 219 (FVLKAGYLEK…WVQQLKFVLQ (104 aa)). Residues Y151 and Y197 each carry the phosphotyrosine modification. S223 carries the phosphoserine modification. Y261 carries the post-translational modification Phosphotyrosine. Residues 264 to 293 (LPEEEEDSAPVKVEEQRKMSQDSVHHTSGD) are disordered. Positions 275-293 (KVEEQRKMSQDSVHHTSGD) are enriched in basic and acidic residues. Phosphoserine is present on residues S283 and S286. The SH3 domain occupies 297–358 (DYANFYQGLW…PKAYIMEMYD (62 aa)).

It belongs to the SKAP family. Homodimer. Interacts with PTPNS1. Part of a complex consisting of SKAP2, FYB1 and PTPNS1. Part of a complex consisting of SKAP2, FYB1 and LILRB3. May interact with actin. Interacts with FYB1, which is required for SKAP2 protein stability. Interacts with LAT, GRB2, PTK2B and PRAM1. May interact with FYN, HCK and LYN. Interacts with FASLG. Post-translationally, phosphorylated in resting platelets. Phosphorylated by FYN on Tyr-261 upon T-cell activation. Dephosphorylated on Tyr-75 by PTPN22. As to expression, ubiquitously expressed. Present in platelets (at protein level).

Its subcellular location is the cytoplasm. Functionally, may be involved in B-cell and macrophage adhesion processes. In B-cells, may act by coupling the B-cell receptor (BCR) to integrin activation. May play a role in src signaling pathway. The polypeptide is Src kinase-associated phosphoprotein 2 (SKAP2) (Homo sapiens (Human)).